The primary structure comprises 188 residues: UPF0200 protein YG5714_1176 (188 aa).

An ATP-binding site is contributed by 15–22; it reads GMPGSGKS.

It belongs to the UPF0200 family.

The sequence is that of UPF0200 protein YG5714_1176 from Saccharolobus islandicus (strain Y.G.57.14 / Yellowstone #1) (Sulfolobus islandicus).